Reading from the N-terminus, the 160-residue chain is Large ribosomal subunit protein eL21B (160 aa).

The segment at 114–140 is disordered; sequence AKRKEAKAQGKTVQLRRQPAPPATAHF.

Belongs to the eukaryotic ribosomal protein eL21 family. As to quaternary structure, component of the large ribosomal subunit (LSU). Mature yeast ribosomes consist of a small (40S) and a large (60S) subunit. The 40S small subunit contains 1 molecule of ribosomal RNA (18S rRNA) and at least 33 different proteins. The large 60S subunit contains 3 rRNA molecules (25S, 5.8S and 5S rRNA) and at least 46 different proteins.

It is found in the cytoplasm. In terms of biological role, component of the ribosome, a large ribonucleoprotein complex responsible for the synthesis of proteins in the cell. The small ribosomal subunit (SSU) binds messenger RNAs (mRNAs) and translates the encoded message by selecting cognate aminoacyl-transfer RNA (tRNA) molecules. The large subunit (LSU) contains the ribosomal catalytic site termed the peptidyl transferase center (PTC), which catalyzes the formation of peptide bonds, thereby polymerizing the amino acids delivered by tRNAs into a polypeptide chain. The nascent polypeptides leave the ribosome through a tunnel in the LSU and interact with protein factors that function in enzymatic processing, targeting, and the membrane insertion of nascent chains at the exit of the ribosomal tunnel. The protein is Large ribosomal subunit protein eL21B (rpl2102) of Schizosaccharomyces pombe (strain 972 / ATCC 24843) (Fission yeast).